Here is a 719-residue protein sequence, read N- to C-terminus: Ferric reductase transmembrane component 4 (719 aa).

Positions 1–18 (MLLVHIISFLLFFQLSAA) are cleaved as a signal peptide. Residues 19–156 (KAPPSKTSLI…YGYYYNHDIP (138 aa)) lie on the Extracellular side of the membrane. Asn51, Asn80, Asn101, Asn113, Asn127, and Asn135 each carry an N-linked (GlcNAc...) asparagine glycan. The helical transmembrane segment at 157–177 (YYFGGIICAYFVGVMLLAGLI) threads the bilayer. Residues 178–228 (RFLNYTPIKKIMFQQKLVNYVRGYTTLPTLYEKHAEPFSYLKVITGYLPTR) lie on the Cytoplasmic side of the membrane. The helical transmembrane segment at 229-249 (FETLVILGYLILHTIFMAYKY) threads the bilayer. Residues 250 to 267 (QYDPYHIIFAAHRAEVAH) lie on the Extracellular side of the membrane. Residues 268–288 (FVAYRSGILSFAHLPLIVLFA) traverse the membrane as a helical segment. The Ferric oxidoreductase domain occupies 273-407 (SGILSFAHLP…SGIEWIYAAI (135 aa)). Residues 289 to 304 (GRNNFLQLISGLKHTS) are Cytoplasmic-facing. Residues 305–325 (FIVFHKWLGRMMFLDAIIHAA) form a helical membrane-spanning segment. The heme site is built by His309 and His323. Residues 326-346 (GFTNYYLYYKKWNTVRLRVYW) lie on the Extracellular side of the membrane. A helical transmembrane segment spans residues 347–367 (KFGIATTCLAGMLIFFSIAAF). The Cytoplasmic portion of the chain corresponds to 368 to 373 (RRHYYE). A helical transmembrane segment spans residues 374 to 394 (TFMALHIVFAALFLYTCWEHV). 2 residues coordinate heme: His379 and His393. Residue Thr395 is a topological domain, extracellular. Residues 396-416 (NFSGIEWIYAAIAIWGVDRIV) form a helical membrane-spanning segment. Positions 408–527 (AIWGVDRIVR…EGPYGSKSTA (120 aa)) constitute an FAD-binding FR-type domain. The Cytoplasmic segment spans residues 417–719 (RITRIALLGF…IEYLEEYQAW (303 aa)). Position 472 to 478 (472 to 478 (HPFTVMD)) interacts with FAD. 519–522 (GPYG) serves as a coordination point for NADP(+). Polar residues-rich tracts occupy residues 606 to 618 (EKIS…NGET) and 625 to 643 (SSLS…TELP). The interval 606 to 643 (EKISSNEVKNGETTAEKAPSSLSNSEKAPSESENTELP) is disordered. NADP(+) is bound at residue 685 to 686 (CG).

Belongs to the ferric reductase (FRE) family. The cofactor is FAD.

The protein localises to the cell membrane. It carries out the reaction 2 a Fe(II)-siderophore + NADP(+) + H(+) = 2 a Fe(III)-siderophore + NADPH. In terms of biological role, siderophore-iron reductase responsible for reducing extracellular iron prior to import. Catalyzes the reductive uptake of Fe(3+) bound to dihydroxamate rhodotorulic acid. Fe(3+) is reduced to Fe(2+), which then dissociates from the siderophore and can be imported by the high-affinity Fe(2+) transport complex in the plasma membrane. This is Ferric reductase transmembrane component 4 (FRE4) from Saccharomyces cerevisiae (strain ATCC 204508 / S288c) (Baker's yeast).